Consider the following 200-residue polypeptide: 3-isopropylmalate dehydratase small subunit (200 aa).

The protein belongs to the LeuD family. LeuD type 1 subfamily. As to quaternary structure, heterodimer of LeuC and LeuD.

The enzyme catalyses (2R,3S)-3-isopropylmalate = (2S)-2-isopropylmalate. It functions in the pathway amino-acid biosynthesis; L-leucine biosynthesis; L-leucine from 3-methyl-2-oxobutanoate: step 2/4. Functionally, catalyzes the isomerization between 2-isopropylmalate and 3-isopropylmalate, via the formation of 2-isopropylmaleate. This Haemophilus influenzae (strain 86-028NP) protein is 3-isopropylmalate dehydratase small subunit.